Reading from the N-terminus, the 425-residue chain is E3 ubiquitin-protein ligase TRIM31 (425 aa).

The RING-type zinc-finger motif lies at 16–57 (CPICLDILQKPVTIDCGHNFCLKCITQIGETSCGFFKCPLCK). The segment at 90–131 (RKEATCPRHQEMFHYFCEDDGKFLCFVCRESKDHKSHNVSLI) adopts a B box-type zinc-finger fold. Zn(2+)-binding residues include Cys95, His98, Cys117, and His123. Coiled-coil stretches lie at residues 126 to 162 (HNVS…VKAQ) and 270 to 307 (LELE…DENR). The interval 328-360 (HKMNKTSEPGSSSAGGRTTSGPPNHHSSAPSHS) is disordered. The segment covering 336 to 360 (PGSSSAGGRTTSGPPNHHSSAPSHS) has biased composition (low complexity).

The protein belongs to the TRIM/RBCC family. As to quaternary structure, may form oligomers. Interacts with isoform p52shc of SHC1. Auto-ubiquitinated (in vitro). As to expression, up-regulated in gastric adenocarcinomas.

It is found in the cytoplasm. Its subcellular location is the mitochondrion. The enzyme catalyses S-ubiquitinyl-[E2 ubiquitin-conjugating enzyme]-L-cysteine + [acceptor protein]-L-lysine = [E2 ubiquitin-conjugating enzyme]-L-cysteine + N(6)-ubiquitinyl-[acceptor protein]-L-lysine.. Its pathway is protein modification; protein ubiquitination. E3 ubiquitin-protein ligase that acts as a regulator of antiviral immune response and inflammation by mediating ubiquitination of substrates. Acts as a regulator of innate immune defense against viruses by mediating 'Lys-63'-linked ubiquitination of MAVS, promoting MAVS polymerization and formation of three-stranded helical filaments on mitochondria. Acts as a negative regulator of the NLRP3 inflammasome by catalyzing 'Lys-48'-linked ubiquitination of NLRP3, leading to its degradation. Regulator of Src-induced anchorage independent cell growth. The sequence is that of E3 ubiquitin-protein ligase TRIM31 from Homo sapiens (Human).